A 144-amino-acid chain; its full sequence is Maximins 3/H14 (144 aa).

A signal peptide spans 1–18; the sequence is MNFKYIVAVSFLIASAYA. 2 propeptides span residues 19–43 and 73–122; these read RSVQ…REIR and RTAE…KKEK. The residue at position 143 (I143) is an Isoleucine amide.

This sequence belongs to the bombinin family. As to expression, expressed by the skin glands.

Its subcellular location is the secreted. Maximin-3 shows antibacterial activity against both Gram-positive and Gram-negative bacteria. It also shows antimicrobial activity against the fungus C.albicans, but not against A.flavus nor P.uticale. It has little hemolytic activity. It possess a significant cytotoxicity against tumor cell lines. It possess a significant anti-HIV activity. It shows high spermicidal activity. Its function is as follows. Maximin-H14 shows antimicrobial activity against bacteria and against the fungus C.albicans. Shows strong hemolytic activity. The sequence is that of Maximins 3/H14 from Bombina maxima (Giant fire-bellied toad).